A 674-amino-acid chain; its full sequence is Translation initiation factor IF-2 (674 aa).

The tr-type G domain occupies 174–344 (IRPPVVTVMG…LLVAELREIK (171 aa)). The segment at 183-190 (GHVDHGKT) is G1. 183–190 (GHVDHGKT) provides a ligand contact to GTP. A G2 region spans residues 208–212 (GITQS). The segment at 229–232 (DTPG) is G3. GTP contacts are provided by residues 229-233 (DTPGH) and 283-286 (NKID). The G4 stretch occupies residues 283–286 (NKID). The tract at residues 320 to 322 (SAR) is G5.

The protein belongs to the TRAFAC class translation factor GTPase superfamily. Classic translation factor GTPase family. IF-2 subfamily.

It is found in the cytoplasm. In terms of biological role, one of the essential components for the initiation of protein synthesis. Protects formylmethionyl-tRNA from spontaneous hydrolysis and promotes its binding to the 30S ribosomal subunits. Also involved in the hydrolysis of GTP during the formation of the 70S ribosomal complex. This chain is Translation initiation factor IF-2, found in Pseudothermotoga lettingae (strain ATCC BAA-301 / DSM 14385 / NBRC 107922 / TMO) (Thermotoga lettingae).